A 303-amino-acid polypeptide reads, in one-letter code: Porphobilinogen deaminase (303 aa).

An S-(dipyrrolylmethanemethyl)cysteine modification is found at C241.

It belongs to the HMBS family. In terms of assembly, monomer. Dipyrromethane is required as a cofactor.

It carries out the reaction 4 porphobilinogen + H2O = hydroxymethylbilane + 4 NH4(+). The protein operates within porphyrin-containing compound metabolism; protoporphyrin-IX biosynthesis; coproporphyrinogen-III from 5-aminolevulinate: step 2/4. It participates in porphyrin-containing compound metabolism; chlorophyll biosynthesis. In terms of biological role, tetrapolymerization of the monopyrrole PBG into the hydroxymethylbilane pre-uroporphyrinogen in several discrete steps. The chain is Porphobilinogen deaminase from Roseiflexus sp. (strain RS-1).